Reading from the N-terminus, the 510-residue chain is Sphingolipid C9-methyltransferase B (510 aa).

A glycan (N-linked (GlcNAc...) asparagine) is linked at Asn-55. 2 helical membrane passes run 62-82 and 84-104; these read LLGGTLVGLPAFLTWFFGGGA and TFVFFFLLSVLPVLVAFWTYA. Asn-175 carries N-linked (GlcNAc...) asparagine glycosylation. Residues 227 to 228, 264 to 272, 290 to 295, and 320 to 321 each bind S-adenosyl-L-methionine; these read YT, MLDIGCGWG, TIAENQ, and YR. N-linked (GlcNAc...) asparagine glycosylation is present at Asn-294.

It belongs to the CFA/CMAS family.

The protein localises to the membrane. The enzyme catalyses a (4E,8E)-4-sphinga-4,8-dienine ceramide + S-adenosyl-L-methionine = a 9-methyl-(4E,8E)-sphinga-4,8-dienine ceramide + S-adenosyl-L-homocysteine + H(+). Its pathway is lipid metabolism; sphingolipid metabolism. Its function is as follows. Catalyzes methylation of the sphingoid base component of glucosylceramides (GluCers) at the C9-position. Sphingolipid C9-methylation requires 4,8-desaturated ceramides as substrates. Glucosylceramides play important roles in growth, differentiation and pathogenicity. The methyl group at the C9-position distinguishes fungal glucosylceramides from those of plants and animals and may thus play a role in host-pathogen interactions enabling the host to recognize the fungal attack and initiate specific defense responses. This is Sphingolipid C9-methyltransferase B from Emericella nidulans (strain FGSC A4 / ATCC 38163 / CBS 112.46 / NRRL 194 / M139) (Aspergillus nidulans).